The chain runs to 238 residues: Probable amino-acid ABC transporter permease protein y4tF (238 aa).

An ABC transmembrane type-1 domain is found at 29–223 (AWVTIQFTLY…GIALVLSFFM (195 aa)). A run of 5 helical transmembrane segments spans residues 33–53 (IQFTLYSMFFGAVCSFAFGIG), 77–97 (LLVQLFWLFFALPIAGDMMGI), 103–123 (PVVAGVLALSLNLGAYGAEIV), 152–172 (VALPQAIPEMMPSFSNLAIAA), and 203–223 (TVYTMVLLMYFGIALVLSFFM).

Belongs to the binding-protein-dependent transport system permease family. HisMQ subfamily.

The protein resides in the cell inner membrane. In terms of biological role, probably part of the binding-protein-dependent transport system y4tEFGH for an amino acid. Probably responsible for the translocation of the substrate across the membrane. The sequence is that of Probable amino-acid ABC transporter permease protein y4tF from Sinorhizobium fredii (strain NBRC 101917 / NGR234).